A 384-amino-acid chain; its full sequence is S-adenosylmethionine synthase (384 aa).

ATP is bound at residue histidine 15. Residue aspartate 17 coordinates Mg(2+). Residue glutamate 43 participates in K(+) binding. 2 residues coordinate L-methionine: glutamate 56 and glutamine 99. The flexible loop stretch occupies residues 99-109; the sequence is QSPDINQGVDR. ATP contacts are provided by residues 164–166, 231–232, aspartate 240, 246–247, alanine 263, and lysine 267; these read DAK, RF, and RK. Aspartate 240 is an L-methionine binding site. Residue lysine 271 participates in L-methionine binding.

This sequence belongs to the AdoMet synthase family. In terms of assembly, homotetramer; dimer of dimers. The cofactor is Mg(2+). K(+) is required as a cofactor.

The protein resides in the cytoplasm. The catalysed reaction is L-methionine + ATP + H2O = S-adenosyl-L-methionine + phosphate + diphosphate. Its pathway is amino-acid biosynthesis; S-adenosyl-L-methionine biosynthesis; S-adenosyl-L-methionine from L-methionine: step 1/1. Functionally, catalyzes the formation of S-adenosylmethionine (AdoMet) from methionine and ATP. The overall synthetic reaction is composed of two sequential steps, AdoMet formation and the subsequent tripolyphosphate hydrolysis which occurs prior to release of AdoMet from the enzyme. This chain is S-adenosylmethionine synthase, found in Shewanella piezotolerans (strain WP3 / JCM 13877).